Here is a 632-residue protein sequence, read N- to C-terminus: Chaperone protein DnaK (632 aa).

Phosphothreonine; by autocatalysis is present on threonine 198. The interval 599–632 is disordered; it reads YKKAGASQQGAGSTTQSKKEEDVIEAEVEDKDNK. Over residues 604-614 the composition is skewed to polar residues; sequence ASQQGAGSTTQ. The span at 620–632 shows a compositional bias: acidic residues; sequence DVIEAEVEDKDNK.

This sequence belongs to the heat shock protein 70 family.

In terms of biological role, acts as a chaperone. The sequence is that of Chaperone protein DnaK from Thermodesulfovibrio yellowstonii (strain ATCC 51303 / DSM 11347 / YP87).